Consider the following 125-residue polypeptide: Small ribosomal subunit protein uS12m (125 aa).

Residues 1–26 (MPTINQLLRKKSSRQAPKLKSKKPAL) are disordered. Basic residues predominate over residues 8–23 (LRKKSSRQAPKLKSKK).

It belongs to the universal ribosomal protein uS12 family.

It localises to the mitochondrion. This chain is Small ribosomal subunit protein uS12m (RPS12), found in Prototheca wickerhamii.